We begin with the raw amino-acid sequence, 497 residues long: Glutathione hydrolase 6 (497 aa).

A disordered region spans residues 1-34 (MDATTGPVHYHKLQLWEPGVESEEEEEEEEEEIA). Over 1 to 51 (MDATTGPVHYHKLQLWEPGVESEEEEEEEEEEIAEPLVLSLRRLQNTPRNE) the chain is Cytoplasmic. Acidic residues predominate over residues 20-34 (VESEEEEEEEEEEIA). A helical; Signal-anchor for type II membrane protein transmembrane segment spans residues 52-72 (VGGLPGAWARLLAGLLLLAVS). Residues 73–497 (SSLALRQLHS…PSGCCPFQGY (425 aa)) lie on the Extracellular side of the membrane. N-linked (GlcNAc...) asparagine glycosylation is found at Asn164, Asn169, Asn367, and Asn378.

It belongs to the gamma-glutamyltransferase family. In terms of assembly, heterodimer composed of the light and heavy chains. The active site is located in the light chain. In terms of processing, cleaved by autocatalysis into a large and a small subunit and the autocatalytic cleavage is essential to the functional activation of the enzyme.

It is found in the membrane. It carries out the reaction an N-terminal (5-L-glutamyl)-[peptide] + an alpha-amino acid = 5-L-glutamyl amino acid + an N-terminal L-alpha-aminoacyl-[peptide]. It catalyses the reaction glutathione + H2O = L-cysteinylglycine + L-glutamate. The enzyme catalyses an S-substituted glutathione + H2O = an S-substituted L-cysteinylglycine + L-glutamate. Its pathway is sulfur metabolism; glutathione metabolism. Hydrolyzes and transfers gamma-glutamyl moieties from glutathione and other gamma-glutamyl compounds to acceptors. This is Glutathione hydrolase 6 from Mus musculus (Mouse).